Here is a 509-residue protein sequence, read N- to C-terminus: Bifunctional purine biosynthesis protein PurH (509 aa).

The 144-residue stretch at 1–144 (MKRALISVSD…KNYAAVTVVV (144 aa)) folds into the MGS-like domain.

The protein belongs to the PurH family.

The enzyme catalyses (6R)-10-formyltetrahydrofolate + 5-amino-1-(5-phospho-beta-D-ribosyl)imidazole-4-carboxamide = 5-formamido-1-(5-phospho-D-ribosyl)imidazole-4-carboxamide + (6S)-5,6,7,8-tetrahydrofolate. It carries out the reaction IMP + H2O = 5-formamido-1-(5-phospho-D-ribosyl)imidazole-4-carboxamide. Its pathway is purine metabolism; IMP biosynthesis via de novo pathway; 5-formamido-1-(5-phospho-D-ribosyl)imidazole-4-carboxamide from 5-amino-1-(5-phospho-D-ribosyl)imidazole-4-carboxamide (10-formyl THF route): step 1/1. It participates in purine metabolism; IMP biosynthesis via de novo pathway; IMP from 5-formamido-1-(5-phospho-D-ribosyl)imidazole-4-carboxamide: step 1/1. This Listeria monocytogenes serotype 4b (strain CLIP80459) protein is Bifunctional purine biosynthesis protein PurH.